The following is a 459-amino-acid chain: Argininosuccinate lyase (459 aa).

It belongs to the lyase 1 family. Argininosuccinate lyase subfamily.

It is found in the cytoplasm. The catalysed reaction is 2-(N(omega)-L-arginino)succinate = fumarate + L-arginine. It participates in amino-acid biosynthesis; L-arginine biosynthesis; L-arginine from L-ornithine and carbamoyl phosphate: step 3/3. This Prochlorococcus marinus (strain AS9601) protein is Argininosuccinate lyase.